The primary structure comprises 173 residues: Peptide deformylase (173 aa).

Fe cation is bound by residues Cys94 and His136. Residue Glu137 is part of the active site. His140 is a Fe cation binding site.

Belongs to the polypeptide deformylase family. Fe(2+) is required as a cofactor.

It carries out the reaction N-terminal N-formyl-L-methionyl-[peptide] + H2O = N-terminal L-methionyl-[peptide] + formate. Functionally, removes the formyl group from the N-terminal Met of newly synthesized proteins. Requires at least a dipeptide for an efficient rate of reaction. N-terminal L-methionine is a prerequisite for activity but the enzyme has broad specificity at other positions. The sequence is that of Peptide deformylase from Desulfosudis oleivorans (strain DSM 6200 / JCM 39069 / Hxd3) (Desulfococcus oleovorans).